A 448-amino-acid chain; its full sequence is Fibulin-5 (448 aa).

A signal peptide spans 1–23 (MPGLKRILTVTILALWLPHPGNA). Positions 42–82 (DIDECRTIPEACRGDMMCVNQNGGYLCIPRTNPVYRGPYSN) constitute an EGF-like 1; calcium-binding domain. 17 cysteine pairs are disulfide-bonded: Cys46-Cys59, Cys53-Cys68, Cys131-Cys144, Cys138-Cys153, Cys155-Cys166, Cys172-Cys181, Cys177-Cys190, Cys192-Cys205, Cys211-Cys221, Cys217-Cys230, Cys232-Cys245, Cys251-Cys262, Cys258-Cys271, Cys273-Cys286, Cys292-Cys305, Cys299-Cys314, and Cys320-Cys332. Residues 54–56 (RGD) carry the Cell attachment site motif. The 41-residue stretch at 127 to 167 (DVDECATDSHQCNPTQICINTEGGYTCSCTDGYWLLEGQCL) folds into the EGF-like 2; calcium-binding domain. The EGF-like 3; calcium-binding domain maps to 168 to 206 (DIDECRYGYCQQLCANVPGSYSCTCNPGFTLNDDGRSCQ). One can recognise an EGF-like 4; calcium-binding domain in the interval 207-246 (DVNECETENPCVQTCVNTYGSFICRCDPGYELEEDGIHCS). Residues 245-448 (CSDMDECSFS…LRIYVSQYPF (204 aa)) form an interaction with LOXL1 region. The region spanning 247 to 287 (DMDECSFSEFLCQHECVNQPGSYFCSCPPGYVLLEDNRSCQ) is the EGF-like 5; calcium-binding domain. N-linked (GlcNAc...) asparagine glycosylation is found at Asn283 and Asn296. In terms of domain architecture, EGF-like 6; calcium-binding spans 288–333 (DINECEHRNHTCTPLQTCYNLQGGFKCIDPIVCEEPYLLIGDNRCM).

This sequence belongs to the fibulin family. In terms of assembly, homodimer. Monomer, homodimerizes in presence of Ca(2+). Interacts with ELN. Interacts (via N-terminus) with the integrins ITGAV/ITGB3, ITGAV/ITGB5 and ITGA9/ITGB1. Interacts with FBN1 (via N-terminal domain). Forms a ternary complex with ELN and FBN1. Interacts with EFEMP2 with moderate affinity. Interacts with LOXL1. N-glycosylated.

The protein localises to the secreted. It is found in the extracellular space. Its subcellular location is the extracellular matrix. Essential for elastic fiber formation, is involved in the assembly of continuous elastin (ELN) polymer and promotes the interaction of microfibrils and ELN. Stabilizes and organizes elastic fibers in the skin, lung and vasculature. Promotes adhesion of endothelial cells through interaction of integrins and the RGD motif. Vascular ligand for integrin receptors which may play a role in vascular development and remodeling. May act as an adapter that mediates the interaction between FBN1 and ELN. The chain is Fibulin-5 (Fbln5) from Rattus norvegicus (Rat).